Reading from the N-terminus, the 174-residue chain is MSYKLDVKAQYIKDLSFENPNSPQIFVMMSKATPEINISVNVSSISLPVKADDQKSGTENLSSLYEVTLQVNAEARIQNTVAFICEIKYCGVFSIKSDTENNEIDLSHQEVKDMLLVAAPSILFPFVRELIARATSSSGFPPLMLDIVDFRTMYENQLKQGVGQNDNDNSVDNV.

The protein belongs to the SecB family. In terms of assembly, homotetramer, a dimer of dimers. One homotetramer interacts with 1 SecA dimer.

The protein resides in the cytoplasm. In terms of biological role, one of the proteins required for the normal export of preproteins out of the cell cytoplasm. It is a molecular chaperone that binds to a subset of precursor proteins, maintaining them in a translocation-competent state. It also specifically binds to its receptor SecA. In Ehrlichia ruminantium (strain Gardel), this protein is Protein-export protein SecB.